The primary structure comprises 297 residues: Homoserine kinase (297 aa).

79-89 serves as a coordination point for ATP; that stretch reads PIARGLGSSGA.

The protein belongs to the GHMP kinase family. Homoserine kinase subfamily.

Its subcellular location is the cytoplasm. It carries out the reaction L-homoserine + ATP = O-phospho-L-homoserine + ADP + H(+). Its pathway is amino-acid biosynthesis; L-threonine biosynthesis; L-threonine from L-aspartate: step 4/5. Catalyzes the ATP-dependent phosphorylation of L-homoserine to L-homoserine phosphate. In Pyrobaculum aerophilum (strain ATCC 51768 / DSM 7523 / JCM 9630 / CIP 104966 / NBRC 100827 / IM2), this protein is Homoserine kinase.